The primary structure comprises 423 residues: Transcription factor bHLH14 (423 aa).

Residues 192 to 243 (GKTTKHTNQTGSYPKPAVSDHSKSGNQQFGSERKRRRKLETTRVAAATKEKH) are disordered. A bHLH domain is found at 245–294 (PAVLSHVEAEKQRREKLNHRFYALRAIVPKVSRMDKASLLSDAVSYIESL). The tract at residues 312 to 343 (ETDKLDNSSSNTSPSSVEYQVNQKPSKSNRGS) is disordered. Low complexity predominate over residues 318–327 (NSSSNTSPSS). Residues 328-342 (VEYQVNQKPSKSNRG) are compositionally biased toward polar residues.

Homodimer.

The protein resides in the nucleus. The protein is Transcription factor bHLH14 (BHLH14) of Arabidopsis thaliana (Mouse-ear cress).